A 342-amino-acid polypeptide reads, in one-letter code: Dihydroorotate dehydrogenase (quinone) (342 aa).

Residues 60-64 (AGFDK) and threonine 84 contribute to the FMN site. Lysine 64 is a substrate binding site. 109 to 113 (NRMGF) provides a ligand contact to substrate. Asparagine 137 and asparagine 170 together coordinate FMN. Asparagine 170 lines the substrate pocket. Serine 173 serves as the catalytic Nucleophile. Substrate is bound at residue asparagine 175. Positions 215 and 243 each coordinate FMN. 244-245 (NT) contributes to the substrate binding site. FMN is bound by residues glycine 266, glycine 295, and 316–317 (YT).

This sequence belongs to the dihydroorotate dehydrogenase family. Type 2 subfamily. As to quaternary structure, monomer. The cofactor is FMN.

The protein resides in the cell membrane. It carries out the reaction (S)-dihydroorotate + a quinone = orotate + a quinol. It functions in the pathway pyrimidine metabolism; UMP biosynthesis via de novo pathway; orotate from (S)-dihydroorotate (quinone route): step 1/1. In terms of biological role, catalyzes the conversion of dihydroorotate to orotate with quinone as electron acceptor. The polypeptide is Dihydroorotate dehydrogenase (quinone) (Halorhodospira halophila (strain DSM 244 / SL1) (Ectothiorhodospira halophila (strain DSM 244 / SL1))).